The following is a 345-amino-acid chain: N-acetyl-gamma-glutamyl-phosphate reductase (345 aa).

The active site involves cysteine 153.

It belongs to the NAGSA dehydrogenase family. Type 1 subfamily.

The protein resides in the cytoplasm. The catalysed reaction is N-acetyl-L-glutamate 5-semialdehyde + phosphate + NADP(+) = N-acetyl-L-glutamyl 5-phosphate + NADPH + H(+). It participates in amino-acid biosynthesis; L-arginine biosynthesis; N(2)-acetyl-L-ornithine from L-glutamate: step 3/4. Functionally, catalyzes the NADPH-dependent reduction of N-acetyl-5-glutamyl phosphate to yield N-acetyl-L-glutamate 5-semialdehyde. The chain is N-acetyl-gamma-glutamyl-phosphate reductase from Methylacidiphilum infernorum (isolate V4) (Methylokorus infernorum (strain V4)).